Reading from the N-terminus, the 100-residue chain is NADH-quinone oxidoreductase subunit K (100 aa).

A run of 3 helical transmembrane segments spans residues 2–22 (VPTT…MIGV), 29–49 (IMVF…LVAF), and 63–83 (FIVM…IVAI).

The protein belongs to the complex I subunit 4L family. As to quaternary structure, NDH-1 is composed of 15 different subunits. Subunits NuoA, H, J, K, L, M, N constitute the membrane sector of the complex.

The protein localises to the cell membrane. It carries out the reaction a quinone + NADH + 5 H(+)(in) = a quinol + NAD(+) + 4 H(+)(out). Its function is as follows. NDH-1 shuttles electrons from NADH, via FMN and iron-sulfur (Fe-S) centers, to quinones in the respiratory chain. The immediate electron acceptor for the enzyme in this species is believed to be a menaquinone. Couples the redox reaction to proton translocation (for every two electrons transferred, four hydrogen ions are translocated across the cytoplasmic membrane), and thus conserves the redox energy in a proton gradient. The protein is NADH-quinone oxidoreductase subunit K of Deinococcus deserti (strain DSM 17065 / CIP 109153 / LMG 22923 / VCD115).